The primary structure comprises 602 residues: Elongation factor 4 (602 aa).

Positions 7-189 (KYIRNFSIVA…AIVSKVPAPY (183 aa)) constitute a tr-type G domain. Residues 19-24 (DHGKST) and 136-139 (NKID) each bind GTP.

It belongs to the TRAFAC class translation factor GTPase superfamily. Classic translation factor GTPase family. LepA subfamily.

The protein resides in the cell membrane. It catalyses the reaction GTP + H2O = GDP + phosphate + H(+). Its function is as follows. Required for accurate and efficient protein synthesis under certain stress conditions. May act as a fidelity factor of the translation reaction, by catalyzing a one-codon backward translocation of tRNAs on improperly translocated ribosomes. Back-translocation proceeds from a post-translocation (POST) complex to a pre-translocation (PRE) complex, thus giving elongation factor G a second chance to translocate the tRNAs correctly. Binds to ribosomes in a GTP-dependent manner. The chain is Elongation factor 4 from Clostridium botulinum (strain Loch Maree / Type A3).